The sequence spans 808 residues: Protein Ac66 (808 aa).

Over residues 132–141 (PFSTPPPTQP) the composition is skewed to pro residues. Positions 132–151 (PFSTPPPTQPPESNVAGVGG) are disordered.

Interacts with the putative E3 ligase IE0 and with viral ubiquitin/vUbi.

It localises to the host nucleus. The protein resides in the host cytoplasm. Functionally, plays an essential role in the efficient egress of nucleocapsids from the host nucleus to the cytoplasm. This chain is Protein Ac66 (Ac66), found in Lepidoptera (butterflies and moths).